We begin with the raw amino-acid sequence, 582 residues long: Semenogelin-2 (582 aa).

The signal sequence occupies residues 1–23; that stretch reads MKSIILFVLSLLLILEKQAAVMG. 6 disordered regions span residues 26-65, 132-159, 272-295, 318-358, 379-417, and 439-582; these read CGSKGQLPSGSSQFPRGQKGQHYSGQKDEQHTKSKGSFSI, GGQAHRGTQNPSQDQGNSPSGKGISSQY, NLNQDQEHGQKTHKISYQSSRTEE, TEEK…ERHL, EEQIHGKSQNQVRIPSQAQEHGHKENKMSYQSSSTEERR, and EEQI…PVST. 2 stretches are compositionally biased toward polar residues: residues 31–40 and 137–159; these read QLPSGSSQFP and RGTQNPSQDQGNSPSGKGISSQY. Polar residues predominate over residues 325-335; sequence KSQNQVTIHSQ. The span at 336 to 345 shows a compositional bias: basic and acidic residues; the sequence is GQEHGHKENK. Composition is skewed to polar residues over residues 379-397, 439-457, 487-496, and 506-524; these read EEQIHGKSQNQVRIPSQAQ, KDVSQSSTSF, and SQIQTPNPNQDQWSVQNAK. Composition is skewed to basic and acidic residues over residues 525–552 and 559–582; these read GKSDQSAGREQDLLSHEQKGRHQQESSE and TEHEVAYDDHLTQQYNEDRNPVST.

It belongs to the semenogelin family. As to quaternary structure, interacts with SERPINA5.

It localises to the secreted. In terms of biological role, participates in the formation of a gel matrix (sperm coagulum) entrapping the accessory gland secretions and ejaculated spermatozoa. This chain is Semenogelin-2 (SEMG2), found in Hylobates lar (Lar gibbon).